Here is a 237-residue protein sequence, read N- to C-terminus: Putative HTH-type transcriptional regulator ycf28 (237 aa).

The 74-residue stretch at 155–228 folds into the HTH crp-type domain; it reads KSITNRLISL…KKKVIIHDPI (74 aa). Residues 188–207 constitute a DNA-binding region (H-T-H motif); that stretch reads HKVLAQIIGSNRVSITRIIS.

It localises to the plastid. Its subcellular location is the chloroplast. This is Putative HTH-type transcriptional regulator ycf28 (ycf28) from Porphyra purpurea (Red seaweed).